A 453-amino-acid chain; its full sequence is Homogentisate 1,2-dioxygenase (453 aa).

Residue histidine 306 is the Proton acceptor of the active site. 2 residues coordinate Fe cation: histidine 349 and glutamate 355. Homogentisate contacts are provided by tyrosine 364 and histidine 385. Fe cation is bound at residue histidine 385.

This sequence belongs to the homogentisate dioxygenase family. In terms of assembly, hexamer; dimer of trimers. Fe cation serves as cofactor.

It carries out the reaction homogentisate + O2 = 4-maleylacetoacetate + H(+). It functions in the pathway amino-acid degradation; L-phenylalanine degradation; acetoacetate and fumarate from L-phenylalanine: step 4/6. Its function is as follows. Involved in the catabolism of homogentisate (2,5-dihydroxyphenylacetate or 2,5-OH-PhAc), a central intermediate in the degradation of phenylalanine and tyrosine. Catalyzes the oxidative ring cleavage of the aromatic ring of homogentisate to yield maleylacetoacetate. The sequence is that of Homogentisate 1,2-dioxygenase from Rhizobium leguminosarum bv. trifolii (strain WSM2304).